The sequence spans 271 residues: Troponin T, fast skeletal muscle (271 aa).

Residues M1–E21 show a composition bias toward acidic residues. Residues M1–K74 form a disordered region. S2 bears the N-acetylserine mark. S2 is subject to Phosphoserine. Composition is skewed to basic and acidic residues over residues E29–R53 and P62–K74. The residue at position 90 (S90) is a Phosphoserine. The segment covering R113 to K155 has biased composition (basic and acidic residues). Residues R113–L192 form a disordered region. Phosphoserine is present on residues S161, S168, and S169. Residues T183–L192 show a composition bias toward basic and acidic residues. S205 carries the phosphoserine modification. Y221 is modified (phosphotyrosine). Residues D249 to K271 form a disordered region.

It belongs to the troponin T family.

Troponin T is the tropomyosin-binding subunit of troponin, the thin filament regulatory complex which confers calcium-sensitivity to striated muscle actomyosin ATPase activity. The chain is Troponin T, fast skeletal muscle (TNNT3) from Sus scrofa (Pig).